A 341-amino-acid polypeptide reads, in one-letter code: MAANKREPKVVVLGGGSWGTTVASICARRGPTLQWVRSAVTAQDINDNHRNSRYLGNDVVLSDTLRATTDFTEAANCADVVVMGVPSHGFRGVLVELSKELRPWVPVVSLVKGLEQGTNMRMSQIIEEVLPGHPAGILAGPNIAREVAEGYAAAAVLAMPDQHLATRLSAMFRTRRFRVYTTDDVVGVETAGALKNVFAIAVGMGYSLGIGENTRALVIARALREMTKLGVAMGGKSETFPGLAGLGDLIVTCTSQRSRNRHVGEQLGAGKPIDEIIASMSQVAEGVKAAGVVMEFANEFGLNMPIAREVDAVINHGSTVEQAYRGLIAEVPGHEVHGSGF.

Residues serine 17, tryptophan 18, arginine 37, and lysine 112 each contribute to the NADPH site. Sn-glycerol 3-phosphate-binding residues include lysine 112 and glycine 140. Alanine 144 contributes to the NADPH binding site. Residues lysine 195, aspartate 248, serine 258, arginine 259, and asparagine 260 each coordinate sn-glycerol 3-phosphate. The Proton acceptor role is filled by lysine 195. Arginine 259 contributes to the NADPH binding site. 2 residues coordinate NADPH: valine 283 and glutamate 285.

The protein belongs to the NAD-dependent glycerol-3-phosphate dehydrogenase family.

Its subcellular location is the cytoplasm. The catalysed reaction is sn-glycerol 3-phosphate + NAD(+) = dihydroxyacetone phosphate + NADH + H(+). It carries out the reaction sn-glycerol 3-phosphate + NADP(+) = dihydroxyacetone phosphate + NADPH + H(+). Its pathway is membrane lipid metabolism; glycerophospholipid metabolism. Its function is as follows. Catalyzes the reduction of the glycolytic intermediate dihydroxyacetone phosphate (DHAP) to sn-glycerol 3-phosphate (G3P), the key precursor for phospholipid synthesis. The chain is Glycerol-3-phosphate dehydrogenase [NAD(P)+] 1 from Mycobacterium bovis (strain ATCC BAA-935 / AF2122/97).